Reading from the N-terminus, the 181-residue chain is Probable cobalt-precorrin-6B C(15)-methyltransferase (decarboxylating) (181 aa).

Residues Thr16, 40–44 (GCGSG), Asp61, and Ala89 each bind S-adenosyl-L-methionine.

It belongs to the methyltransferase superfamily. Archaeal-type CbiT family.

It carries out the reaction Co-precorrin-6B + S-adenosyl-L-methionine = Co-precorrin-7 + S-adenosyl-L-homocysteine + CO2. Its pathway is cofactor biosynthesis; adenosylcobalamin biosynthesis; cob(II)yrinate a,c-diamide from sirohydrochlorin (anaerobic route): step 8/10. Its function is as follows. Catalyzes the methylation of C-15 in cobalt-precorrin-6B followed by the decarboxylation of C-12 to form cobalt-precorrin-7. This chain is Probable cobalt-precorrin-6B C(15)-methyltransferase (decarboxylating), found in Methanococcus maripaludis (strain C5 / ATCC BAA-1333).